Here is a 460-residue protein sequence, read N- to C-terminus: Argininosuccinate lyase (460 aa).

Belongs to the lyase 1 family. Argininosuccinate lyase subfamily.

The protein localises to the cytoplasm. The catalysed reaction is 2-(N(omega)-L-arginino)succinate = fumarate + L-arginine. The protein operates within amino-acid biosynthesis; L-arginine biosynthesis; L-arginine from L-ornithine and carbamoyl phosphate: step 3/3. This is Argininosuccinate lyase from Oleidesulfovibrio alaskensis (strain ATCC BAA-1058 / DSM 17464 / G20) (Desulfovibrio alaskensis).